Here is a 54-residue protein sequence, read N- to C-terminus: SPbeta prophage-derived uncharacterized protein YoqE (54 aa).

The sequence is that of SPbeta prophage-derived uncharacterized protein YoqE (yoqE) from Bacillus subtilis (strain 168).